The following is a 132-amino-acid chain: MSSRREIRWGNARIYASQNNTIITITDITGAEIISKASGGMVVKADREKPSPYAAMLAANKAANDAFDKGISAIHIKVRAQGGYGSKTPGPGAQPAIRALARAGFIIGRIEDVTPLPHDTIRRPGGRRGRRV.

This sequence belongs to the universal ribosomal protein uS11 family. In terms of assembly, part of the 30S ribosomal subunit.

Its function is as follows. Located on the platform of the 30S subunit. In Sulfolobus acidocaldarius (strain ATCC 33909 / DSM 639 / JCM 8929 / NBRC 15157 / NCIMB 11770), this protein is Small ribosomal subunit protein uS11.